Consider the following 115-residue polypeptide: Salivary protein gSG6 (115 aa).

The signal sequence occupies residues 1–28 (MAIRVELLLAMVLLPLLLLESVVPHAAA).

As to expression, female saliva (at protein level). Distal-lateral lobes of female salivary gland (at protein level). Not detected in male salivary gland (at protein level).

The protein localises to the secreted. In terms of biological role, required for efficient probing and blood feeding. In Anopheles gambiae (African malaria mosquito), this protein is Salivary protein gSG6.